The sequence spans 235 residues: MAKRSKAYEAAAAKIDAEKFYAPFEAVTLAKDTNPSKFDATVEVAFRLGVDPRKADQMVRGTVNLPHGTGKVARVLVFATGDKAEAAIAAGADFVGSDDLIEKIAAGWTDFDAAVATPDLMGKVGRLGKVLGPRNLMPNPKTGTVTPDVTKAVNDIKGGKIDFRVDKHSNLHFIIGKVSFDAIKLAENYAAALEEVLRLKPSASKGRYIQKATVATTFGPGISVDPNVTKVLTEV.

This sequence belongs to the universal ribosomal protein uL1 family. In terms of assembly, part of the 50S ribosomal subunit.

Its function is as follows. Binds directly to 23S rRNA. The L1 stalk is quite mobile in the ribosome, and is involved in E site tRNA release. Protein L1 is also a translational repressor protein, it controls the translation of the L11 operon by binding to its mRNA. This is Large ribosomal subunit protein uL1 from Arthrobacter sp. (strain FB24).